We begin with the raw amino-acid sequence, 100 residues long: Nucleoid-associated protein Caur_0522 (100 aa).

Belongs to the YbaB/EbfC family. As to quaternary structure, homodimer.

It is found in the cytoplasm. The protein localises to the nucleoid. In terms of biological role, binds to DNA and alters its conformation. May be involved in regulation of gene expression, nucleoid organization and DNA protection. This chain is Nucleoid-associated protein Caur_0522, found in Chloroflexus aurantiacus (strain ATCC 29366 / DSM 635 / J-10-fl).